The sequence spans 123 residues: Insulin-like peptide-1 (123 aa).

The signal sequence occupies residues Met1–Gly24. 4 disulfides stabilise this stretch: Cys29-Cys106, Cys41-Cys109, Cys53-Cys122, and Cys108-Cys113. Pro34 carries the post-translational modification 4-hydroxyproline; partial. Residues Glu59–Arg102 constitute a propeptide, c peptide. A 4-carboxyglutamate modification is found at Glu107. 4-carboxyglutamate; partial is present on Glu117.

Belongs to the insulin family. As to quaternary structure, heterodimer of A and B chains; disulfide-linked. As to expression, expressed by the venom duct.

The protein resides in the secreted. In terms of biological role, this venom insulin facilitates prey capture by rapidly inducing hypoglycemic shock. Intraperitoneal injection of this peptide into zebrafish lowers blood glucose with the same potency than human insulin. In vivo, when applied to water, this peptide reduces overall locomotor activity of zebrafish larvae, observed as a significant decrease in the percentage of time spent swimming and movement frequency. This Conus victoriae (Queen Victoria cone) protein is Insulin-like peptide-1.